Here is a 290-residue protein sequence, read N- to C-terminus: UPF0761 membrane protein ASA_4118 (290 aa).

6 helical membrane-spanning segments follow: residues 48–68 (LLSL…FPVF), 104–124 (NTTA…ISAI), 144–164 (FAMY…SIAI), 182–202 (IGYL…FLLV), 216–236 (AFIG…GFAI), and 250–270 (ALAT…VVLL).

This sequence belongs to the UPF0761 family.

The protein resides in the cell inner membrane. The sequence is that of UPF0761 membrane protein ASA_4118 from Aeromonas salmonicida (strain A449).